A 317-amino-acid chain; its full sequence is sn-1-specific diacylglycerol lipase ABHD11 (317 aa).

A mitochondrion-targeting transit peptide spans 1 to 20 (MSNFAMSALCRVFTRGAPCG). The 236-residue stretch at 69–304 (PLVFLHGLFG…ASHWIHADKP (236 aa)) folds into the AB hydrolase-1 domain. Active-site charge relay system residues include Ser142, Glu238, and His297.

It belongs to the AB hydrolase superfamily. Phosphorylated.

It is found in the mitochondrion. Its subcellular location is the mitochondrion matrix. It catalyses the reaction 1-octadecanoyl-2-(5Z,8Z,11Z,14Z-eicosatetraenoyl)-sn-glycerol + H2O = 2-(5Z,8Z,11Z,14Z-eicosatetraenoyl)-glycerol + octadecanoate + H(+). The enzyme catalyses a 1,2-diacyl-sn-glycerol + H2O = a 2-acylglycerol + a fatty acid + H(+). The catalysed reaction is a 1,3-diacyl-sn-glycerol + H2O = a 1-acyl-sn-glycerol + a fatty acid + H(+). It carries out the reaction 1-octadecanoyl-2-(9Z-octadecenoyl)-sn-glycerol + H2O = 2-(9Z-octadecenoyl)-glycerol + octadecanoate + H(+). It catalyses the reaction 1-octadecanoyl-2-(4Z,7Z,10Z,13Z,16Z,19Z-docosahexaenoyl)-sn-glycerol + H2O = 2-(4Z,7Z,10Z,13Z,16Z,19Z-docosahexaenoyl)-glycerol + octadecanoate + H(+). The enzyme catalyses 1,2-didecanoylglycerol + H2O = decanoylglycerol + decanoate + H(+). Functionally, catalyzes the hydrolysis of diacylglycerol in vitro and may function as a key regulator in lipid metabolism, namely by regulating the intracellular levels of diacylglycerol. 1,2-diacyl-sn-glycerols are the preferred substrate over 1,3-diacyl-sn-glycerols. The enzyme hydrolyzes stearate in preference to palmitate from the sn-1 position of 1,2-diacyl-sn-glycerols. This is sn-1-specific diacylglycerol lipase ABHD11 from Danio rerio (Zebrafish).